A 61-amino-acid chain; its full sequence is Photosystem II reaction center protein K (61 aa).

Positions 1 to 24 (MLNIFCLICICLNSTLYSSSFFFA) are excised as a propeptide. Residues 32-52 (FFNPIIDVMPIIPVLFFLLAF) form a helical membrane-spanning segment.

It belongs to the PsbK family. PSII is composed of 1 copy each of membrane proteins PsbA, PsbB, PsbC, PsbD, PsbE, PsbF, PsbH, PsbI, PsbJ, PsbK, PsbL, PsbM, PsbT, PsbX, PsbY, PsbZ, Psb30/Ycf12, at least 3 peripheral proteins of the oxygen-evolving complex and a large number of cofactors. It forms dimeric complexes.

The protein localises to the plastid. The protein resides in the chloroplast thylakoid membrane. Functionally, one of the components of the core complex of photosystem II (PSII). PSII is a light-driven water:plastoquinone oxidoreductase that uses light energy to abstract electrons from H(2)O, generating O(2) and a proton gradient subsequently used for ATP formation. It consists of a core antenna complex that captures photons, and an electron transfer chain that converts photonic excitation into a charge separation. The sequence is that of Photosystem II reaction center protein K from Phalaenopsis aphrodite subsp. formosana (Moth orchid).